The following is an 831-amino-acid chain: Glucan 1,3-beta-glucosidase D (831 aa).

Basic and acidic residues predominate over residues 1–21 (MPSQSRSRDRYGRDSDRDRSR). Disordered regions lie at residues 1–246 (MPSQ…RGQS) and 261–288 (APDM…SDGS). Topologically, residues 1–300 (MPSQSRSRDR…LTPFWKRKKW (300 aa)) are cytoplasmic. Residues 32–41 (EDDDDDDDFD) are compositionally biased toward acidic residues. Composition is skewed to basic and acidic residues over residues 42-70 (DNPR…HDDY), 78-94 (EPRR…ERAR), and 151-177 (DAAR…HKST). Residues 178–195 (DSSNSSAGLLNANALAKL) show a composition bias toward low complexity. Composition is skewed to basic and acidic residues over residues 197 to 216 (AQHE…EAKA) and 275 to 286 (PPRERRWEKDSD). The helical; Signal-anchor for type II membrane protein transmembrane segment at 301 to 321 (WWIGAIVLVIVVIIIVVAVVV) threads the bilayer. Over 322 to 831 (SNNKKSDSDS…PSFGNLPEYY (510 aa)) the chain is Extracellular. The disordered stretch occupies residues 325-360 (KKSDSDSDSDSNSGSSDSWGGDKSSLNGLDHDSIPK). Positions 334–350 (DSNSGSSDSWGGDKSSL) are enriched in low complexity. 3 N-linked (GlcNAc...) asparagine glycosylation sites follow: N379, N396, and N547. E598 (proton donor) is an active-site residue. N-linked (GlcNAc...) asparagine glycosylation is found at N611, N637, N670, and N690. The active-site Nucleophile is E703.

Belongs to the glycosyl hydrolase 5 (cellulase A) family.

It is found in the cell membrane. It catalyses the reaction Successive hydrolysis of beta-D-glucose units from the non-reducing ends of (1-&gt;3)-beta-D-glucans, releasing alpha-glucose.. In terms of biological role, glucosidase involved in the degradation of cellulosic biomass. Active on lichenan. In Emericella nidulans (strain FGSC A4 / ATCC 38163 / CBS 112.46 / NRRL 194 / M139) (Aspergillus nidulans), this protein is Glucan 1,3-beta-glucosidase D (exgD).